We begin with the raw amino-acid sequence, 167 residues long: T-cell surface glycoprotein CD3 delta chain (167 aa).

Positions 1-21 (MEHSRCLSCLILAALLSQVNP) are cleaved as a signal peptide. At 22 to 100 (RALEVLEAED…NCVELDSATL (79 aa)) the chain is on the extracellular side. Residues C37 and C73 are joined by a disulfide bond. N-linked (GlcNAc...) asparagine glycosylation is found at N38 and N55. A helical transmembrane segment spans residues 101 to 121 (AGLIITDIIATVLLALGVYCF). The Cytoplasmic portion of the chain corresponds to 122-167 (AGHETGRFSRAADTQVLMGNDQLYQPLRERNDAQYSRLGDKWARNK). Residues 134-162 (DTQVLMGNDQLYQPLRERNDAQYSRLGDK) form the ITAM domain. Residues Y145 and Y156 each carry the phosphotyrosine modification.

As to quaternary structure, the TCR-CD3 complex is composed of a CD3D/CD3E and a CD3G/CD3E heterodimers that preferentially associate with TCRalpha and TCRbeta, respectively, to form TCRalpha/CD3E/CD3G and TCRbeta/CD3G/CD3E trimers. In turn, the hexamer interacts with CD3Z homodimer to form the TCR-CD3 complex. Alternatively, TCRalpha and TCRbeta can be replaced by TCRgamma and TCRdelta. Interacts with coreceptors CD4 and CD8. In terms of processing, phosphorylated on Tyr residues after T-cell receptor triggering by LCK in association with CD4/CD8. As to expression, CD3D is mostly present on T-lymphocytes with its TCR-CD3 partners. Present also in fetal NK-cells.

The protein localises to the cell membrane. Its function is as follows. Part of the TCR-CD3 complex present on T-lymphocyte cell surface that plays an essential role in adaptive immune response. When antigen presenting cells (APCs) activate T-cell receptor (TCR), TCR-mediated signals are transmitted across the cell membrane by the CD3 chains CD3D, CD3E, CD3G and CD3Z. All CD3 chains contain immunoreceptor tyrosine-based activation motifs (ITAMs) in their cytoplasmic domain. Upon TCR engagement, these motifs become phosphorylated by Src family protein tyrosine kinases LCK and FYN, resulting in the activation of downstream signaling pathways. In addition of this role of signal transduction in T-cell activation, CD3D plays an essential role in thymocyte differentiation. Indeed, participates in correct intracellular TCR-CD3 complex assembly and surface expression. In absence of a functional TCR-CD3 complex, thymocytes are unable to differentiate properly. Interacts with CD4 and CD8 and thus serves to establish a functional link between the TCR and coreceptors CD4 and CD8, which is needed for activation and positive selection of CD4 or CD8 T-cells. The sequence is that of T-cell surface glycoprotein CD3 delta chain (CD3D) from Ovis aries (Sheep).